The primary structure comprises 633 residues: DNA repair protein XRCC1 (633 aa).

S140 carries the post-translational modification Phosphoserine. K176 is covalently cross-linked (Glycyl lysine isopeptide (Lys-Gly) (interchain with G-Cter in SUMO1); alternate). A Glycyl lysine isopeptide (Lys-Gly) (interchain with G-Cter in SUMO2); alternate cross-link involves residue K176. T198 is subject to Phosphothreonine. At S199 the chain carries Phosphoserine. Phosphothreonine is present on T202. 3 positions are modified to phosphoserine: S204, S226, and S241. The segment covering 221-231 (AASSASPVSRA) has biased composition (low complexity). Positions 221–313 (AASSASPVSR…TEPRRPRAGP (93 aa)) are disordered. The span at 240-257 (ESPKGKRKLDLNQEEKKT) shows a compositional bias: basic and acidic residues. At T257 the chain carries Phosphothreonine. Phosphoserine is present on residues S259 and S266. Residues 277-291 (APTRTPATAPVPARA) show a composition bias toward low complexity. T281 carries the phosphothreonine modification. The segment covering 299 to 313 (PRGEGTEPRRPRAGP) has biased composition (basic and acidic residues). The BRCT 1 domain occupies 315 to 403 (ELGKILQGVV…RRLPSQRYLM (89 aa)). The residue at position 371 (S371) is a Phosphoserine; by PRKDC. Disordered stretches follow at residues 400–462 (RYLM…AASP), 471–490 (EGVQ…DTED), and 498–536 (QKEH…DLPV). A phosphoserine mark is found at S408, S409, S410, and S421. Positions 427-443 (KLPQKQPQTKTKPTQAA) are enriched in low complexity. Phosphoserine occurs at positions 446 and 447. T453 and T457 each carry phosphothreonine. Residues S461 and S485 each carry the phosphoserine modification. Over residues 481 to 490 (GAEDSGDTED) the composition is skewed to acidic residues. T488 carries the phosphothreonine modification. S518 carries the post-translational modification Phosphoserine. A phosphothreonine mark is found at T519 and T523. Positions 538 to 629 (ELPDFFQGKH…KLLPHQLYGV (92 aa)) constitute a BRCT 2 domain.

As to quaternary structure, homodimer. Interacts with polynucleotide kinase (PNK), DNA polymerase-beta (POLB) and DNA ligase III (LIG3). Interacts with APTX and APLF. Interacts with APEX1; the interaction is induced by SIRT1 and increases with the acetylated form of APEX1. Interacts with (poly-ADP-ribosylated) PARP1. Post-translationally, phosphorylation of Ser-371 causes dimer dissociation. Phosphorylation by CK2 promotes interaction with APTX and APLF. In terms of processing, sumoylated. Expressed in fibroblasts, retinal pigmented epithelial cells and lymphoblastoid cells (at protein level).

The protein resides in the nucleus. It is found in the chromosome. Its function is as follows. Scaffold protein involved in DNA single-strand break repair by mediating the assembly of DNA break repair protein complexes. Negatively regulates ADP-ribosyltransferase activity of PARP1 during base-excision repair in order to prevent excessive PARP1 activity. Recognizes and binds poly-ADP-ribose chains: specifically binds auto-poly-ADP-ribosylated PARP1, limiting its activity. The sequence is that of DNA repair protein XRCC1 from Homo sapiens (Human).